A 366-amino-acid polypeptide reads, in one-letter code: uncharacterized protein (366 aa).

6 helical membrane passes run 164–184 (IPLI…FADI), 188–208 (IVVG…RKLL), 223–243 (VFPI…IYSL), 256–276 (FIGE…LILM), 299–319 (FFCL…GEYL), and 325–345 (FIMF…LSVI).

The protein to A.fulgidus AF2058.

The protein localises to the cell membrane. This is an uncharacterized protein from Methanocaldococcus jannaschii (strain ATCC 43067 / DSM 2661 / JAL-1 / JCM 10045 / NBRC 100440) (Methanococcus jannaschii).